A 396-amino-acid chain; its full sequence is Argininosuccinate synthase (396 aa).

Position 9 to 17 (9 to 17 (AYSGGLDTS)) interacts with ATP. Position 85 (tyrosine 85) interacts with L-citrulline. An ATP-binding site is contributed by glycine 115. The L-aspartate site is built by threonine 117, asparagine 121, and aspartate 122. Asparagine 121 lines the L-citrulline pocket. Residues arginine 125, serine 173, glutamate 258, and tyrosine 270 each contribute to the L-citrulline site.

This sequence belongs to the argininosuccinate synthase family. Type 1 subfamily. Homotetramer.

The protein resides in the cytoplasm. The catalysed reaction is L-citrulline + L-aspartate + ATP = 2-(N(omega)-L-arginino)succinate + AMP + diphosphate + H(+). Its pathway is amino-acid biosynthesis; L-arginine biosynthesis; L-arginine from L-ornithine and carbamoyl phosphate: step 2/3. The chain is Argininosuccinate synthase from Streptococcus mutans serotype c (strain ATCC 700610 / UA159).